Here is a 308-residue protein sequence, read N- to C-terminus: L-lactate dehydrogenase 2 (308 aa).

NAD(+) contacts are provided by residues Val14, Asp35, Tyr65, and 79–80; that span reads GA. Arg88 contacts substrate. Ser101 provides a ligand contact to NAD(+). A substrate-binding site is contributed by 120 to 123; it reads NPVD. Thr143 provides a ligand contact to NAD(+). 148–151 is a binding site for substrate; the sequence is DTAR. His175 (proton acceptor) is an active-site residue. Thr225 serves as a coordination point for substrate.

This sequence belongs to the LDH/MDH superfamily. LDH family. In terms of assembly, homotetramer.

The protein resides in the cytoplasm. It carries out the reaction (S)-lactate + NAD(+) = pyruvate + NADH + H(+). It functions in the pathway fermentation; pyruvate fermentation to lactate; (S)-lactate from pyruvate: step 1/1. Its function is as follows. Catalyzes the conversion of lactate to pyruvate. In Lactobacillus johnsonii (strain CNCM I-12250 / La1 / NCC 533), this protein is L-lactate dehydrogenase 2.